The chain runs to 259 residues: Sorbitol-6-phosphate 2-dehydrogenase (259 aa).

4–33 contacts NAD(+); it reads VAVVIGGGQTLGAFLCHGLAAEGYRVAVVD. Serine 141 is a substrate binding site. Catalysis depends on tyrosine 154, which acts as the Proton acceptor.

Belongs to the short-chain dehydrogenases/reductases (SDR) family. Homotetramer.

It carries out the reaction D-sorbitol 6-phosphate + NAD(+) = beta-D-fructose 6-phosphate + NADH + H(+). Its pathway is carbohydrate metabolism; D-sorbitol degradation; D-fructose 6-phosphate from D-sorbitol 6-phosphate: step 1/1. In Escherichia coli (strain K12), this protein is Sorbitol-6-phosphate 2-dehydrogenase (srlD).